The following is a 232-amino-acid chain: 5'-methylthioadenosine/S-adenosylhomocysteine nucleosidase (232 aa).

E12 (proton acceptor) is an active-site residue. Residues G78, I152, and 173–174 each bind substrate; that span reads ME. D197 acts as the Proton donor in catalysis.

It belongs to the PNP/UDP phosphorylase family. MtnN subfamily. In terms of assembly, homodimer.

It carries out the reaction S-adenosyl-L-homocysteine + H2O = S-(5-deoxy-D-ribos-5-yl)-L-homocysteine + adenine. The catalysed reaction is S-methyl-5'-thioadenosine + H2O = 5-(methylsulfanyl)-D-ribose + adenine. It catalyses the reaction 5'-deoxyadenosine + H2O = 5-deoxy-D-ribose + adenine. It participates in amino-acid biosynthesis; L-methionine biosynthesis via salvage pathway; S-methyl-5-thio-alpha-D-ribose 1-phosphate from S-methyl-5'-thioadenosine (hydrolase route): step 1/2. In terms of biological role, catalyzes the irreversible cleavage of the glycosidic bond in both 5'-methylthioadenosine (MTA) and S-adenosylhomocysteine (SAH/AdoHcy) to adenine and the corresponding thioribose, 5'-methylthioribose and S-ribosylhomocysteine, respectively. Also cleaves 5'-deoxyadenosine, a toxic by-product of radical S-adenosylmethionine (SAM) enzymes, into 5-deoxyribose and adenine. Thus, is required for in vivo function of the radical SAM enzymes biotin synthase and lipoic acid synthase, that are inhibited by 5'-deoxyadenosine accumulation. This chain is 5'-methylthioadenosine/S-adenosylhomocysteine nucleosidase, found in Klebsiella pneumoniae subsp. pneumoniae (strain ATCC 700721 / MGH 78578).